We begin with the raw amino-acid sequence, 447 residues long: BAG family molecular chaperone regulator 5 (447 aa).

BAG domains lie at serine 9–alanine 86, glutamine 95–methionine 167, serine 182–glutamate 260, serine 275–glutamate 350, and proline 365–serine 442.

In terms of assembly, binds to the ATPase domain of HSP/HSP70 chaperones. Binds PRKN. Interacts with HSPA8. Interacts with JPH2.

Its function is as follows. Co-chaperone for HSP/HSP70 proteins. It functions as a nucleotide-exchange factor promoting the release of ADP from HSP70, thereby activating HSP70-mediated protein refolding. Has an essential role in maintaining proteostasis at junctional membrane complexes (JMC), where it may function as a scaffold between the HSPA8 chaperone and JMC proteins enabling correct, HSPA8-dependent JMC protein folding. Inhibits both auto-ubiquitination of PRKN and ubiquitination of target proteins by PRKN. The polypeptide is BAG family molecular chaperone regulator 5 (Bag5) (Mus musculus (Mouse)).